Reading from the N-terminus, the 142-residue chain is Large ribosomal subunit protein uL11 (142 aa).

Belongs to the universal ribosomal protein uL11 family. As to quaternary structure, part of the ribosomal stalk of the 50S ribosomal subunit. Interacts with L10 and the large rRNA to form the base of the stalk. L10 forms an elongated spine to which L12 dimers bind in a sequential fashion forming a multimeric L10(L12)X complex. Post-translationally, one or more lysine residues are methylated.

Functionally, forms part of the ribosomal stalk which helps the ribosome interact with GTP-bound translation factors. The protein is Large ribosomal subunit protein uL11 of Mycolicibacterium gilvum (strain PYR-GCK) (Mycobacterium gilvum (strain PYR-GCK)).